Here is a 415-residue protein sequence, read N- to C-terminus: Branched-chain-amino-acid aminotransferase 5, chloroplastic (415 aa).

A chloroplast-targeting transit peptide spans 1–65; that stretch reads MERSAVASGF…IVSEVSRNRR (65 aa). At K261 the chain carries N6-(pyridoxal phosphate)lysine.

The protein belongs to the class-IV pyridoxal-phosphate-dependent aminotransferase family. The cofactor is pyridoxal 5'-phosphate.

The protein localises to the plastid. It localises to the chloroplast. It carries out the reaction L-leucine + 2-oxoglutarate = 4-methyl-2-oxopentanoate + L-glutamate. It catalyses the reaction L-isoleucine + 2-oxoglutarate = (S)-3-methyl-2-oxopentanoate + L-glutamate. The enzyme catalyses L-valine + 2-oxoglutarate = 3-methyl-2-oxobutanoate + L-glutamate. It functions in the pathway amino-acid biosynthesis; L-isoleucine biosynthesis; L-isoleucine from 2-oxobutanoate: step 4/4. Its pathway is amino-acid biosynthesis; L-leucine biosynthesis; L-leucine from 3-methyl-2-oxobutanoate: step 4/4. The protein operates within amino-acid biosynthesis; L-valine biosynthesis; L-valine from pyruvate: step 4/4. In terms of biological role, converts 2-oxo acids to branched-chain amino acids. Acts on leucine, isoleucine and valine. In Arabidopsis thaliana (Mouse-ear cress), this protein is Branched-chain-amino-acid aminotransferase 5, chloroplastic (BCAT5).